A 562-amino-acid chain; its full sequence is MNMNPRHNIREIRAPRGPELSAKSWMTEAPLRMLMNNLDPDVAENPHELVVYGGIGRAARTWEDFDRITAALKTLSEEETLLVQSGKPVGVFRTHKDAPRVLIANSNLVPHWATWDHFNELDKKGLAMYGQMTAGSWIYIGTQGIVQGTYETFVEAGRQHYDGNLKGKWILTGGLGGMGGAQPLAAVMAGACCLAVECDETRIDFRLRTRYVDAKARTLDEALAMIDMWTKAGEAKSVGLLGNAAEIFPELVRRMKAGGPRPDIVTDQTSAHDPRNGYLPVGWTVEEARAKRESDPKSVEIAARASMRAQVEAMVAFWDAGIPTLDYGNNIRQVAKDEGLENAFAFPGFVPAYIRPLFCRGIGPFRWAALSGDPEDIYKTDAKVKELLPDNKHLHNWLDMAKERISFQGLPARICWVGLGDRQKLGLAFNEMVRNGELSAPIVIGRDHLDSGSVASPNRETEAMKDGSDAVSDWPLLNALLNTASGATWVSLHHGGGVGMGFSQHAGMVICADGSEDANRRLERVLWNDPATGVMRHADAGYEIAVDCAKEKGLRLPGILGN.

NAD(+)-binding positions include 53 to 54, Q131, 177 to 179, E197, R202, 243 to 244, 268 to 272, 278 to 279, and Y327; these read GG, GMG, NA, QTSAH, and YL. Residue C415 is part of the active site. G497 is a binding site for NAD(+).

This sequence belongs to the urocanase family. The cofactor is NAD(+).

It localises to the cytoplasm. The enzyme catalyses 4-imidazolone-5-propanoate = trans-urocanate + H2O. Its pathway is amino-acid degradation; L-histidine degradation into L-glutamate; N-formimidoyl-L-glutamate from L-histidine: step 2/3. Functionally, catalyzes the conversion of urocanate to 4-imidazolone-5-propionate. This Chelativorans sp. (strain BNC1) protein is Urocanate hydratase.